Reading from the N-terminus, the 218-residue chain is GCN5-related N-acetyltransferase 9 (218 aa).

In terms of domain architecture, N-acetyltransferase spans serine 36 to threonine 183. Acetyl-CoA is bound by residues methionine 112 to alanine 114, glycine 120 to lysine 125, asparagine 152 to alanine 154, and phenylalanine 159.

It belongs to the acetyltransferase family. GNAT subfamily. As to quaternary structure, oligomer. Expressed throughout the plant.

The protein localises to the cytoplasm. It is found in the nucleus. The enzyme catalyses an N-terminal L-alpha-aminoacyl-[protein] + acetyl-CoA = N-terminal N(alpha)-acetyl-L-alpha-aminoacyl-[protein] + CoA + H(+). It catalyses the reaction L-lysyl-[protein] + acetyl-CoA = N(6)-acetyl-L-lysyl-[protein] + CoA + H(+). Probable protein acetyltransferase with dual specificity triggering both N-alpha-acetylation (NTA) and epsilon-lysine acetylation (KA). This Arabidopsis thaliana (Mouse-ear cress) protein is GCN5-related N-acetyltransferase 9.